The following is a 785-amino-acid chain: Mitochondrial intermediate peptidase (785 aa).

The N-terminal 26 residues, 1–26, are a transit peptide targeting the mitochondrion; sequence MLKVTTSRPWVCSRCVRRQVQSRRRL. The disordered stretch occupies residues 26–51; the sequence is LATASTQYRESRPVPVDNSAPGAKRD. Histidine 566 contacts Zn(2+). Glutamate 567 is an active-site residue. The Zn(2+) site is built by histidine 570 and histidine 573.

Belongs to the peptidase M3 family. Zn(2+) is required as a cofactor.

Its subcellular location is the mitochondrion matrix. It catalyses the reaction Release of an N-terminal octapeptide as second stage of processing of some proteins imported into the mitochondrion.. In terms of biological role, cleaves proteins, imported into the mitochondrion, to their mature size. While most mitochondrial precursor proteins are processed to the mature form in one step by mitochondrial processing peptidase (MPP), the sequential cleavage by MIP of an octapeptide after initial processing by MPP is a required step for a subgroup of nuclear-encoded precursor proteins destined for the matrix or the inner membrane. The chain is Mitochondrial intermediate peptidase (oct1) from Botryotinia fuckeliana (strain B05.10) (Noble rot fungus).